The primary structure comprises 156 residues: MMDYLITQNGGMVFAVLAMATATIFSGIGSAKGVGMTGEAAAALTTSQPEKFGQALILQLLPGTQGLYGFVIAFLIFINLGSDMSVVQGLNFLGASLPIAFTGLFSGIAQGKVAAAGIQILAKKPEHATKGIIFAAMVETYAILGFVISFLLVLNA.

4 helical membrane-spanning segments follow: residues Gly11–Ala31, Leu60–Leu80, Gly89–Ala109, and Ile132–Leu152.

Belongs to the V-ATPase proteolipid subunit family. The N-terminus is blocked.

Its subcellular location is the cell membrane. Functionally, involved in ATP-driven sodium extrusion. The sequence is that of V-type sodium ATPase subunit K (ntpK) from Enterococcus hirae (strain ATCC 9790 / DSM 20160 / JCM 8729 / LMG 6399 / NBRC 3181 / NCIMB 6459 / NCDO 1258 / NCTC 12367 / WDCM 00089 / R).